Here is a 671-residue protein sequence, read N- to C-terminus: DNA ligase (671 aa).

NAD(+) contacts are provided by residues 34 to 38, 83 to 84, and E115; these read DAEYD and SL. Catalysis depends on K117, which acts as the N6-AMP-lysine intermediate. R138, E174, K291, and K315 together coordinate NAD(+). 4 residues coordinate Zn(2+): C409, C412, C427, and C432. In terms of domain architecture, BRCT spans 589-671; sequence RSGGPLTGKS…LQMIDTLEEA (83 aa).

Belongs to the NAD-dependent DNA ligase family. LigA subfamily. Mg(2+) serves as cofactor. Mn(2+) is required as a cofactor.

It carries out the reaction NAD(+) + (deoxyribonucleotide)n-3'-hydroxyl + 5'-phospho-(deoxyribonucleotide)m = (deoxyribonucleotide)n+m + AMP + beta-nicotinamide D-nucleotide.. In terms of biological role, DNA ligase that catalyzes the formation of phosphodiester linkages between 5'-phosphoryl and 3'-hydroxyl groups in double-stranded DNA using NAD as a coenzyme and as the energy source for the reaction. It is essential for DNA replication and repair of damaged DNA. The protein is DNA ligase of Syntrophotalea carbinolica (strain DSM 2380 / NBRC 103641 / GraBd1) (Pelobacter carbinolicus).